The following is a 192-amino-acid chain: Xanthine phosphoribosyltransferase (192 aa).

Xanthine-binding residues include leucine 20 and asparagine 27. Residue alanine 128–alanine 132 coordinates 5-phospho-alpha-D-ribose 1-diphosphate. Lysine 156 provides a ligand contact to xanthine.

The protein belongs to the purine/pyrimidine phosphoribosyltransferase family. Xpt subfamily. As to quaternary structure, homodimer.

Its subcellular location is the cytoplasm. The catalysed reaction is XMP + diphosphate = xanthine + 5-phospho-alpha-D-ribose 1-diphosphate. Its pathway is purine metabolism; XMP biosynthesis via salvage pathway; XMP from xanthine: step 1/1. Converts the preformed base xanthine, a product of nucleic acid breakdown, to xanthosine 5'-monophosphate (XMP), so it can be reused for RNA or DNA synthesis. The protein is Xanthine phosphoribosyltransferase of Staphylococcus aureus (strain Mu3 / ATCC 700698).